A 255-amino-acid polypeptide reads, in one-letter code: 3-dehydroquinate dehydratase (255 aa).

3-dehydroquinate-binding positions include 46-48 and Arg82; that span reads EWR. The active-site Proton donor/acceptor is His143. The active-site Schiff-base intermediate with substrate is the Lys170. The 3-dehydroquinate site is built by Arg213, Ser232, and Gln236.

It belongs to the type-I 3-dehydroquinase family. As to quaternary structure, homodimer.

The enzyme catalyses 3-dehydroquinate = 3-dehydroshikimate + H2O. Its pathway is metabolic intermediate biosynthesis; chorismate biosynthesis; chorismate from D-erythrose 4-phosphate and phosphoenolpyruvate: step 3/7. Its function is as follows. Involved in the third step of the chorismate pathway, which leads to the biosynthesis of aromatic amino acids. Catalyzes the cis-dehydration of 3-dehydroquinate (DHQ) and introduces the first double bond of the aromatic ring to yield 3-dehydroshikimate. The sequence is that of 3-dehydroquinate dehydratase from Bacillus subtilis (strain 168).